The following is a 623-amino-acid chain: MVNQGQPQPNLYDKHINMFPPARARESSHKLGNANSDRHGLPAQNIVPAPYPVDDSIVELTPAIPFTSPSSSSSLSLPLSALNFTDGNADGGQLGTPVTINSNNGMDIFNSKPTGEIGYANNGTNSTGSRYELPFNFSSTKESLGSPAVQDASISSGNRISESVRDNSAPPPYEESESRILQEKVYRTEEKAPIRPLNNNPVPPQKINQPPTGSAKTDDNGSSGGEDKLSSYSPEALAFYQVYKKTITDSSKFTPEIQMQWCETLLTYAFNEDFISQYNINAEKLKRSLKPEEMLKNQKVILEHSFKVLTKLITLKWPPAMYLMGTLYSHQPYLPIKNKNIVIKNDEKALEYYCKAAKLNNSDACYRAGVCFEYQRGTSSLDPSPTKEQCIKKAFQYYQHGAEVCSNSACMYKLGMSHLYGLNMQKTDVLLAIKWFDKAAQKGDSPQTLYELGKIYEFSVLPPEIQNLLFANGIRKDSQLAIKYYQQCAKDFEYPLAQWKLGNCYEFGDLGLPVVAKKSIYWYSKAAAAQPKGNPMAMLSLSGWYLTGAPNILKPNNKEAFNWALKSSKCSDGKLARTEFALGFYYEKGVGCEVDLDLAKQYYQRAARMGFRKAVDALRSLTN.

Residues 141–230 (KESLGSPAVQ…GSSGGEDKLS (90 aa)) form a disordered region. Positions 152–161 (ASISSGNRIS) are enriched in polar residues. Basic and acidic residues predominate over residues 176 to 193 (SESRILQEKVYRTEEKAP). Glycyl lysine isopeptide (Lys-Gly) (interchain with G-Cter in ubiquitin) cross-links involve residues lysine 184 and lysine 191. A compositionally biased stretch (polar residues) spans 206–215 (KINQPPTGSA). Sel1-like repeat units lie at residues 318–361 (PPAM…KLNN), 408–444 (SACM…QKGD), 495–531 (PLAQ…AAQP), and 576–611 (ARTE…RMGF).

This chain is Activator of C kinase protein 1 (ACK1), found in Saccharomyces cerevisiae (strain ATCC 204508 / S288c) (Baker's yeast).